The following is a 213-amino-acid chain: Orotate phosphoribosyltransferase (213 aa).

Lys-26 contacts 5-phospho-alpha-D-ribose 1-diphosphate. Residue 34-35 (FF) participates in orotate binding. Residues 72–73 (YK), Arg-98, Lys-99, Lys-102, and 123–131 (DDVISAGTS) contribute to the 5-phospho-alpha-D-ribose 1-diphosphate site. The orotate site is built by Ser-127 and Arg-155.

The protein belongs to the purine/pyrimidine phosphoribosyltransferase family. PyrE subfamily. As to quaternary structure, homodimer. Mg(2+) serves as cofactor.

It catalyses the reaction orotidine 5'-phosphate + diphosphate = orotate + 5-phospho-alpha-D-ribose 1-diphosphate. The protein operates within pyrimidine metabolism; UMP biosynthesis via de novo pathway; UMP from orotate: step 1/2. In terms of biological role, catalyzes the transfer of a ribosyl phosphate group from 5-phosphoribose 1-diphosphate to orotate, leading to the formation of orotidine monophosphate (OMP). The polypeptide is Orotate phosphoribosyltransferase (Neisseria gonorrhoeae (strain NCCP11945)).